A 75-amino-acid polypeptide reads, in one-letter code: Small ribosomal subunit protein bS18 (75 aa).

A2 is subject to N-acetylalanine.

This sequence belongs to the bacterial ribosomal protein bS18 family. Part of the 30S ribosomal subunit. Forms a tight heterodimer with protein bS6.

Its function is as follows. Binds as a heterodimer with protein bS6 to the central domain of the 16S rRNA, where it helps stabilize the platform of the 30S subunit. This chain is Small ribosomal subunit protein bS18 (rpsR), found in Salmonella typhimurium (strain LT2 / SGSC1412 / ATCC 700720).